Consider the following 151-residue polypeptide: D-aminoacyl-tRNA deacylase (151 aa).

A Gly-cisPro motif, important for rejection of L-amino acids motif is present at residues 137–138 (GP).

This sequence belongs to the DTD family. As to quaternary structure, homodimer.

The protein resides in the cytoplasm. It catalyses the reaction glycyl-tRNA(Ala) + H2O = tRNA(Ala) + glycine + H(+). The catalysed reaction is a D-aminoacyl-tRNA + H2O = a tRNA + a D-alpha-amino acid + H(+). Functionally, an aminoacyl-tRNA editing enzyme that deacylates mischarged D-aminoacyl-tRNAs. Also deacylates mischarged glycyl-tRNA(Ala), protecting cells against glycine mischarging by AlaRS. Acts via tRNA-based rather than protein-based catalysis; rejects L-amino acids rather than detecting D-amino acids in the active site. By recycling D-aminoacyl-tRNA to D-amino acids and free tRNA molecules, this enzyme counteracts the toxicity associated with the formation of D-aminoacyl-tRNA entities in vivo and helps enforce protein L-homochirality. This chain is D-aminoacyl-tRNA deacylase, found in Acaryochloris marina (strain MBIC 11017).